The following is a 293-amino-acid chain: 4-hydroxy-tetrahydrodipicolinate synthase (293 aa).

Thr-45 contacts pyruvate. The Proton donor/acceptor role is filled by Tyr-133. Lys-161 acts as the Schiff-base intermediate with substrate in catalysis. Ile-203 is a pyruvate binding site.

This sequence belongs to the DapA family. As to quaternary structure, homotetramer; dimer of dimers.

Its subcellular location is the cytoplasm. It carries out the reaction L-aspartate 4-semialdehyde + pyruvate = (2S,4S)-4-hydroxy-2,3,4,5-tetrahydrodipicolinate + H2O + H(+). It participates in amino-acid biosynthesis; L-lysine biosynthesis via DAP pathway; (S)-tetrahydrodipicolinate from L-aspartate: step 3/4. In terms of biological role, catalyzes the condensation of (S)-aspartate-beta-semialdehyde [(S)-ASA] and pyruvate to 4-hydroxy-tetrahydrodipicolinate (HTPA). In Exiguobacterium sibiricum (strain DSM 17290 / CCUG 55495 / CIP 109462 / JCM 13490 / 255-15), this protein is 4-hydroxy-tetrahydrodipicolinate synthase.